Reading from the N-terminus, the 443-residue chain is Na(+)-translocating NADH-quinone reductase subunit A (443 aa).

Belongs to the NqrA family. As to quaternary structure, composed of six subunits; NqrA, NqrB, NqrC, NqrD, NqrE and NqrF.

The enzyme catalyses a ubiquinone + n Na(+)(in) + NADH + H(+) = a ubiquinol + n Na(+)(out) + NAD(+). In terms of biological role, NQR complex catalyzes the reduction of ubiquinone-1 to ubiquinol by two successive reactions, coupled with the transport of Na(+) ions from the cytoplasm to the periplasm. NqrA to NqrE are probably involved in the second step, the conversion of ubisemiquinone to ubiquinol. This chain is Na(+)-translocating NADH-quinone reductase subunit A, found in Actinobacillus succinogenes (strain ATCC 55618 / DSM 22257 / CCUG 43843 / 130Z).